The following is a 130-amino-acid chain: Small ribosomal subunit protein uS9 (130 aa).

This sequence belongs to the universal ribosomal protein uS9 family.

The polypeptide is Small ribosomal subunit protein uS9 (Aromatoleum aromaticum (strain DSM 19018 / LMG 30748 / EbN1) (Azoarcus sp. (strain EbN1))).